Consider the following 244-residue polypeptide: 1-(5-phosphoribosyl)-5-[(5-phosphoribosylamino)methylideneamino] imidazole-4-carboxamide isomerase (244 aa).

D8 (proton acceptor) is an active-site residue. D131 (proton donor) is an active-site residue.

This sequence belongs to the HisA/HisF family.

It is found in the cytoplasm. The catalysed reaction is 1-(5-phospho-beta-D-ribosyl)-5-[(5-phospho-beta-D-ribosylamino)methylideneamino]imidazole-4-carboxamide = 5-[(5-phospho-1-deoxy-D-ribulos-1-ylimino)methylamino]-1-(5-phospho-beta-D-ribosyl)imidazole-4-carboxamide. It participates in amino-acid biosynthesis; L-histidine biosynthesis; L-histidine from 5-phospho-alpha-D-ribose 1-diphosphate: step 4/9. The polypeptide is 1-(5-phosphoribosyl)-5-[(5-phosphoribosylamino)methylideneamino] imidazole-4-carboxamide isomerase (Thermomicrobium roseum (strain ATCC 27502 / DSM 5159 / P-2)).